The chain runs to 515 residues: Bifunctional purine biosynthesis protein PurH (515 aa).

The MGS-like domain maps to 1–145 (MTKRALISVS…KNHASVTVVV (145 aa)).

It belongs to the PurH family.

It carries out the reaction (6R)-10-formyltetrahydrofolate + 5-amino-1-(5-phospho-beta-D-ribosyl)imidazole-4-carboxamide = 5-formamido-1-(5-phospho-D-ribosyl)imidazole-4-carboxamide + (6S)-5,6,7,8-tetrahydrofolate. The enzyme catalyses IMP + H2O = 5-formamido-1-(5-phospho-D-ribosyl)imidazole-4-carboxamide. It participates in purine metabolism; IMP biosynthesis via de novo pathway; 5-formamido-1-(5-phospho-D-ribosyl)imidazole-4-carboxamide from 5-amino-1-(5-phospho-D-ribosyl)imidazole-4-carboxamide (10-formyl THF route): step 1/1. Its pathway is purine metabolism; IMP biosynthesis via de novo pathway; IMP from 5-formamido-1-(5-phospho-D-ribosyl)imidazole-4-carboxamide: step 1/1. In Streptococcus suis (strain 98HAH33), this protein is Bifunctional purine biosynthesis protein PurH.